The sequence spans 581 residues: MKSHIESLLAQALDVLKQQEVIPTDFEARIQVDRTKDKTHGDFATNLAMMLTKIARKNPREIAQLIIDSLPEDAQVSKVEIAGPGFINFFIDDSALANQLMTALNDDRLGIALPQAQTVVVDYSSPNLAKEMHVGHLRSTIIGDSVVRALEFMGHKVIRQNHVGDWGTQFGMLLAYMEELRAQSGEQAQMELSDLETFYRAAKVRFDESEEFATRARKLVVALQSGDEYCNKLWREFNDISLSHCHEVYERLGVSLTRADVRGESAYNDDLAQVVRDLDSQGLLSESNGAKVVFQDEFKNKEGEPLPVIIQKADGGYLYATSDMAAMRYRANVLKADRALYFVDLRQALHFQQVFKLARKANFVDDNISLEHMGFGTMNGDDGRPFKTRSGGVVKLVDLLSEADTRALELVRSKNPDMDEAELAKIAKVVGISSVKYADLSKNRASDYIFSFEQMLSFEGNTAPYLLYAYTRVAGIFKRATDVDLSDAKIQLEHEKEKELGTKLAQFNEVLTRMVSKGQPHALCGYLFELAGAFSSFYEACPVLAADTEEQKKSRLLLAKLTAKTLKQGLGLLGIETLERM.

Positions 126–136 match the 'HIGH' region motif; the sequence is PNLAKEMHVGH.

This sequence belongs to the class-I aminoacyl-tRNA synthetase family. As to quaternary structure, monomer.

Its subcellular location is the cytoplasm. It carries out the reaction tRNA(Arg) + L-arginine + ATP = L-arginyl-tRNA(Arg) + AMP + diphosphate. This Shewanella woodyi (strain ATCC 51908 / MS32) protein is Arginine--tRNA ligase.